Consider the following 85-residue polypeptide: Alpha-conotoxin Lt28.1 (85 aa).

The N-terminal stretch at 1 to 21 is a signal peptide; the sequence is MPKLEMMLLVLLILPLCYIDA. A propeptide spanning residues 22 to 40 is cleaved from the precursor; that stretch reads VGPPPPWNMEDEIIEHWQK. Intrachain disulfides connect C61/C74, C66/C84, C67/C79, and C72/C81.

Belongs to the conotoxin D superfamily. As to expression, expressed by the venom duct.

The protein resides in the secreted. Functionally, alpha-conotoxins act on postsynaptic membranes, they bind to the nicotinic acetylcholine receptors (nAChR) and thus inhibit them. This toxin weakly inhibits alpha-9-alpha-10/CHRNA9-CHRNA10 nAChRs (IC(50)=3 uM). The protein is Alpha-conotoxin Lt28.1 of Conus litteratus (Lettered cone).